The following is a 213-amino-acid chain: Putative thymidylate kinase 251L (213 aa).

21-28 (GCDKTGKS) serves as a coordination point for ATP.

It belongs to the thymidylate kinase family.

The enzyme catalyses dTMP + ATP = dTDP + ADP. Its pathway is pyrimidine metabolism; dTTP biosynthesis. In terms of biological role, catalyzes the conversion of dTMP to dTDP. In Acheta domesticus (House cricket), this protein is Putative thymidylate kinase 251L.